A 749-amino-acid chain; its full sequence is Amyloid-beta A4 precursor protein-binding family A member 2 (749 aa).

2 disordered regions span residues 1-94 (MAHQ…PEEE) and 130-343 (DTDE…NNIP). A Phosphoserine modification is found at Ser11. Over residues 70 to 80 (GDSSSDYVNNT) the composition is skewed to polar residues. Acidic residues-rich tracts occupy residues 81-94 (SEEE…PEEE) and 131-142 (TDECQEAVEEWT). Residues 185–270 (HYCASKEGYQ…SAEACPPIKA (86 aa)) are STXBP1-binding. The residue at position 208 (Ser208) is a Phosphoserine. Positions 218 to 227 (DLEDQEEDID) are enriched in acidic residues. Positions 237–247 (LSMTSITSASE) are enriched in polar residues. Over residues 305–315 (RTPEERPKWPH) the composition is skewed to basic and acidic residues. The PID domain maps to 366-555 (LIDGIIFAAN…IINTQEMYND (190 aa)). PDZ domains lie at 568-653 (ELQL…NIVS) and 659-735 (TVLI…MPAA).

Part of a multimeric complex containing STXBP1 and syntaxin-1. Binds to the cytoplasmic domain of amyloid-beta protein, and to the nuclear factor NF-kappa-B/p65 via its PDZ domain. Interacts with the N-terminal domain of NECAB3.

Functionally, putative function in synaptic vesicle exocytosis by binding to STXBP1, an essential component of the synaptic vesicle exocytotic machinery. May modulate processing of the amyloid-beta precursor protein (APP) and hence formation of APP-beta. The chain is Amyloid-beta A4 precursor protein-binding family A member 2 (APBA2) from Pongo abelii (Sumatran orangutan).